A 352-amino-acid polypeptide reads, in one-letter code: PDZ and LIM domain protein 2 (352 aa).

The 84-residue stretch at 1–84 (MALTVDVAGP…PLRLQLDRSQ (84 aa)) folds into the PDZ domain. Disordered regions lie at residues 67 to 97 (SKIRQSPSPLRLQLDRSQATSPGQTNGDSSL) and 111 to 149 (YTESQSSLRSSYSSPTSLSPRAGSPFSPPPSSSSLTGEA). Residues 81 to 95 (DRSQATSPGQTNGDS) are compositionally biased toward polar residues. A compositionally biased stretch (low complexity) spans 111–135 (YTESQSSLRSSYSSPTSLSPRAGSP). Position 124 is a phosphoserine (serine 124). Threonine 126 is subject to Phosphothreonine. Phosphoserine occurs at positions 127, 129, 134, 137, 143, 161, 197, 203, 213, and 266. The tract at residues 170 to 213 (LSYSGRPGSRQAGLGRAGDSAVLVLPPSPGPRSSRPSMDSEGGS) is disordered. The 61-residue stretch at 284 to 344 (HTCEKCSTSI…EKHARQRYSA (61 aa)) folds into the LIM zinc-binding domain.

In terms of assembly, interacts with alpha-actinins ACTN1 and ACTN4, FLNA and MYH9. Interacts (via LIM zinc-binding domain) with MKRN2.

The protein localises to the cytoplasm. Its subcellular location is the nucleus. It is found in the cytoskeleton. Functionally, probable adapter protein located at the actin cytoskeleton that promotes cell attachment. Necessary for the migratory capacity of epithelial cells. Overexpression enhances cell adhesion to collagen and fibronectin and suppresses anchorage independent growth. May contribute to tumor cell migratory capacity. This is PDZ and LIM domain protein 2 (PDLIM2) from Homo sapiens (Human).